The sequence spans 1939 residues: Myosin-1 (1939 aa).

The region spanning 33–82 (DAKTSVFVVDPKESFVKATVQSREGGKVTAKTEAGATVTVKDDQVFPMNP) is the Myosin N-terminal SH3-like domain. 2 positions are modified to phosphothreonine: Thr64 and Thr69. Residues 86–782 (DKIEDMAMMT…LLGLLEEMRD (697 aa)) enclose the Myosin motor domain. At Lys130 the chain carries N6,N6,N6-trimethyllysine. 179–186 (GESGAGKT) lines the ATP pocket. Phosphotyrosine is present on Tyr389. Thr419 is modified (phosphothreonine). Tyr424 carries the post-translational modification Phosphotyrosine. The segment at 659–681 (LNKLMTNLRSTHPHFVRCIIPNE) is actin-binding. His757 bears the Pros-methylhistidine mark. An actin-binding region spans residues 761-775 (KFGHTKVFFKAGLLG). In terms of domain architecture, IQ spans 785–814 (LAQLITRTQAMCRGFLARVEYQKMVERRES). Residues 843–1939 (LLKSAETEKE…EVHTKIISEE (1097 aa)) adopt a coiled-coil conformation. Phosphoserine occurs at positions 1092, 1096, 1162, and 1237. Residue Thr1241 is modified to Phosphothreonine. A phosphoserine mark is found at Ser1243 and Ser1261. Residues Thr1265 and Thr1286 each carry the phosphothreonine modification. 4 positions are modified to phosphoserine: Ser1288, Ser1292, Ser1303, and Ser1306. A Phosphothreonine modification is found at Thr1467. Phosphoserine is present on Ser1474. At Tyr1492 the chain carries Phosphotyrosine. Ser1495 carries the post-translational modification Phosphoserine. Thr1501 carries the phosphothreonine modification. Phosphoserine is present on Ser1514. A Phosphothreonine modification is found at Thr1517. 7 positions are modified to phosphoserine: Ser1542, Ser1554, Ser1574, Ser1600, Ser1603, Ser1714, and Ser1726. Phosphothreonine occurs at positions 1730 and 1736. Ser1739 bears the Phosphoserine mark.

This sequence belongs to the TRAFAC class myosin-kinesin ATPase superfamily. Myosin family. In terms of assembly, muscle myosin is a hexameric protein that consists of 2 heavy chain subunits (MHC), 2 alkali light chain subunits (MLC) and 2 regulatory light chain subunits (MLC-2). Interacts with SLC26A5.

It is found in the cytoplasm. The protein localises to the myofibril. Functionally, required for normal hearing. It plays a role in cochlear amplification of auditory stimuli, likely through the positive regulation of prestin (SLC26A5) activity and outer hair cell (OHC) electromotility. The sequence is that of Myosin-1 from Homo sapiens (Human).